A 513-amino-acid chain; its full sequence is Maturase K (513 aa).

Belongs to the intron maturase 2 family. MatK subfamily.

The protein localises to the plastid. The protein resides in the chloroplast. Its function is as follows. Usually encoded in the trnK tRNA gene intron. Probably assists in splicing its own and other chloroplast group II introns. This Eleusine indica (Goosegrass) protein is Maturase K.